Here is a 380-residue protein sequence, read N- to C-terminus: tRNA-specific 2-thiouridylase MnmA (380 aa).

ATP-binding positions include 26-33 (AMSGGVDS) and Leu-52. The Nucleophile role is filled by Cys-120. A disulfide bridge connects residues Cys-120 and Cys-217. Residue Gly-144 participates in ATP binding. The tract at residues 166 to 168 (RDQ) is interaction with tRNA. Residue Cys-217 is the Cysteine persulfide intermediate of the active site.

Belongs to the MnmA/TRMU family.

The protein localises to the cytoplasm. It catalyses the reaction S-sulfanyl-L-cysteinyl-[protein] + uridine(34) in tRNA + AH2 + ATP = 2-thiouridine(34) in tRNA + L-cysteinyl-[protein] + A + AMP + diphosphate + H(+). Its function is as follows. Catalyzes the 2-thiolation of uridine at the wobble position (U34) of tRNA, leading to the formation of s(2)U34. In Jannaschia sp. (strain CCS1), this protein is tRNA-specific 2-thiouridylase MnmA.